Consider the following 342-residue polypeptide: Protein-glutamate methylesterase/protein-glutamine glutaminase 4 (342 aa).

One can recognise a Response regulatory domain in the interval 2–119 (NIGIVNDLPL…GGSADPSQPL (118 aa)). Asp-53 is modified (4-aspartylphosphate). Residues 144–337 (PAPQGALPPL…DQLISLVQRN (194 aa)) enclose the CheB-type methylesterase domain. Catalysis depends on residues Ser-159, His-186, and Asp-279.

This sequence belongs to the CheB family. In terms of processing, phosphorylated by CheA. Phosphorylation of the N-terminal regulatory domain activates the methylesterase activity.

It is found in the cytoplasm. The enzyme catalyses [protein]-L-glutamate 5-O-methyl ester + H2O = L-glutamyl-[protein] + methanol + H(+). It catalyses the reaction L-glutaminyl-[protein] + H2O = L-glutamyl-[protein] + NH4(+). Its function is as follows. Involved in chemotaxis. Part of a chemotaxis signal transduction system that modulates chemotaxis in response to various stimuli. Catalyzes the demethylation of specific methylglutamate residues introduced into the chemoreceptors (methyl-accepting chemotaxis proteins or MCP) by CheR. Also mediates the irreversible deamidation of specific glutamine residues to glutamic acid. The polypeptide is Protein-glutamate methylesterase/protein-glutamine glutaminase 4 (Burkholderia thailandensis (strain ATCC 700388 / DSM 13276 / CCUG 48851 / CIP 106301 / E264)).